Reading from the N-terminus, the 226-residue chain is Biosynthetic peptidoglycan transglycosylase (226 aa).

Residues 10–30 (IIMTLLALLILPYLLIPVYAL) form a helical membrane-spanning segment.

Belongs to the glycosyltransferase 51 family.

The protein resides in the cell inner membrane. The catalysed reaction is [GlcNAc-(1-&gt;4)-Mur2Ac(oyl-L-Ala-gamma-D-Glu-L-Lys-D-Ala-D-Ala)](n)-di-trans,octa-cis-undecaprenyl diphosphate + beta-D-GlcNAc-(1-&gt;4)-Mur2Ac(oyl-L-Ala-gamma-D-Glu-L-Lys-D-Ala-D-Ala)-di-trans,octa-cis-undecaprenyl diphosphate = [GlcNAc-(1-&gt;4)-Mur2Ac(oyl-L-Ala-gamma-D-Glu-L-Lys-D-Ala-D-Ala)](n+1)-di-trans,octa-cis-undecaprenyl diphosphate + di-trans,octa-cis-undecaprenyl diphosphate + H(+). It functions in the pathway cell wall biogenesis; peptidoglycan biosynthesis. In terms of biological role, peptidoglycan polymerase that catalyzes glycan chain elongation from lipid-linked precursors. This is Biosynthetic peptidoglycan transglycosylase from Agrobacterium fabrum (strain C58 / ATCC 33970) (Agrobacterium tumefaciens (strain C58)).